We begin with the raw amino-acid sequence, 372 residues long: Chaperone protein DnaJ (372 aa).

Residues 5 to 69 (DYYEVLGLTK…QKKARYDQFG (65 aa)) enclose the J domain. The segment at 129-211 (GKETEIEIPK…CRGEGKVQKR (83 aa)) adopts a CR-type zinc-finger fold. Zn(2+) is bound by residues C142, C145, C159, C162, C185, C188, C199, and C202. CXXCXGXG motif repeat units follow at residues 142–149 (CETCHGSG), 159–166 (CSTCNGAG), 185–192 (CTTCHGTG), and 199–206 (CSTCRGEG).

It belongs to the DnaJ family. In terms of assembly, homodimer. Zn(2+) serves as cofactor.

It localises to the cytoplasm. Participates actively in the response to hyperosmotic and heat shock by preventing the aggregation of stress-denatured proteins and by disaggregating proteins, also in an autonomous, DnaK-independent fashion. Unfolded proteins bind initially to DnaJ; upon interaction with the DnaJ-bound protein, DnaK hydrolyzes its bound ATP, resulting in the formation of a stable complex. GrpE releases ADP from DnaK; ATP binding to DnaK triggers the release of the substrate protein, thus completing the reaction cycle. Several rounds of ATP-dependent interactions between DnaJ, DnaK and GrpE are required for fully efficient folding. Also involved, together with DnaK and GrpE, in the DNA replication of plasmids through activation of initiation proteins. This Lysinibacillus sphaericus (strain C3-41) protein is Chaperone protein DnaJ.